Reading from the N-terminus, the 137-residue chain is DNA-directed RNA polymerase I subunit RPA14 (137 aa).

The tract at residues 100 to 137 (PPAQDFSAAPIQVSTTEKKETSIGVSATGGKKTTFADE) is disordered. Position 121 is a phosphoserine (Ser-121).

Component of the RNA polymerase I (Pol I) complex consisting of 14 subunits: RPA135, RPA190, RPC40, RPA14, RPB5, RPO26, RPA43, RPB8, RPA12, RPB10, RPC19, RPC10, RPA49 and RPA34. The complex is composed of a horseshoe-shaped core containing ten subunits (RPA135, RPA190, RPB5, RPO26, RPB8, RPB10, RPC10, RPA12, RPC19 and RPC40) where RPA135 and RPA190 form the DNA-binding cleft. Outside of the core, RPA14 and RPA43 form the stalk that mediates interactions with transcription initiation factors and newly synthesized RNA. Post-translationally, the N-terminus is blocked.

The protein localises to the nucleus. The protein resides in the nucleolus. DNA-dependent RNA polymerases catalyze the transcription of DNA into RNA using the four ribonucleoside triphosphates as substrates. Component of RNA polymerase I (Pol I) which synthesizes ribosomal RNA precursors. RPA14 seems to play a role in the stability of subunits RPO26 and RPA43. In vitro, the RPA14-RPA43 subcomplex binds single-stranded RNA. The sequence is that of DNA-directed RNA polymerase I subunit RPA14 (RPA14) from Saccharomyces cerevisiae (strain ATCC 204508 / S288c) (Baker's yeast).